A 225-amino-acid polypeptide reads, in one-letter code: Ribonuclease 3 (225 aa).

One can recognise an RNase III domain in the interval 7-129 (IPRLCRTLGY…IIGAVYLDSD (123 aa)). Glu-42 provides a ligand contact to Mg(2+). Residue Asp-46 is part of the active site. Mg(2+) contacts are provided by Asp-115 and Glu-118. Residue Glu-118 is part of the active site. The region spanning 155–225 (DPKTLLQELL…AAQALELIKR (71 aa)) is the DRBM domain.

Belongs to the ribonuclease III family. As to quaternary structure, homodimer. The cofactor is Mg(2+).

It is found in the cytoplasm. The enzyme catalyses Endonucleolytic cleavage to 5'-phosphomonoester.. In terms of biological role, digests double-stranded RNA. Involved in the processing of primary rRNA transcript to yield the immediate precursors to the large and small rRNAs (23S and 16S). Processes some mRNAs, and tRNAs when they are encoded in the rRNA operon. Processes pre-crRNA and tracrRNA of type II CRISPR loci if present in the organism. The protein is Ribonuclease 3 of Shewanella woodyi (strain ATCC 51908 / MS32).